A 119-amino-acid chain; its full sequence is uncharacterized protein (119 aa).

An N-terminal signal peptide occupies residues 1 to 30 (MCPECFFLMLCFCGYCSSSSSSFRSSPVYG).

This is an uncharacterized protein from Escherichia coli (strain UTI89 / UPEC).